A 160-amino-acid polypeptide reads, in one-letter code: Endoribonuclease YbeY (160 aa).

Residues histidine 121, histidine 125, and histidine 131 each coordinate Zn(2+).

It belongs to the endoribonuclease YbeY family. Requires Zn(2+) as cofactor.

It is found in the cytoplasm. Single strand-specific metallo-endoribonuclease involved in late-stage 70S ribosome quality control and in maturation of the 3' terminus of the 16S rRNA. The polypeptide is Endoribonuclease YbeY (Hydrogenovibrio crunogenus (strain DSM 25203 / XCL-2) (Thiomicrospira crunogena)).